Here is a 550-residue protein sequence, read N- to C-terminus: Leiomodin-2 (550 aa).

The segment at 1 to 47 (MSTFGYRRGLSKYESIDEDELLASLSPEELKELERELEDIEPDRNLP) is interaction with tropomyosin alpha. Interaction with actin regions lie at residues 1–165 (MSTF…TDNS), 166–500 (KPKT…KEIK), and 524–543 (VHEN…LRRV). Residues serine 11, serine 15, and serine 24 each carry the phosphoserine modification. Positions 84–94 (ERLGECGKVAE) are enriched in basic and acidic residues. 2 disordered regions span residues 84-202 (ERLG…PCGN) and 359-527 (MDKQ…VHEN). Positions 91–147 (KVAEEDKEESEEELIFTESNSEVSEEVCTEDEEESQEEEEDSEEEEDSEEEEETTEA) form a coiled coil. Composition is skewed to acidic residues over residues 95-105 (EDKEESEEELI) and 113-145 (VSEE…EETT). Composition is skewed to polar residues over residues 151–164 (INGT…NTDN) and 170–193 (FKSQ…NSES). Basic and acidic residues predominate over residues 359 to 377 (MDKQRQKRMQEQKQQEGHD). Residues 391–402 (TPGSSPYASPRQ) are compositionally biased toward polar residues. Phosphoserine is present on serine 407. Residues 421–452 (PPSPVAPPPPPPPPPLPPHMLPPPPPPPAPPL) are compositionally biased toward pro residues. Polar residues predominate over residues 468-479 (QQESAQRALQNG). Positions 480-490 (QRKKKGKKVKK) are enriched in basic residues. Residues 497–515 (KEIKNSLRSVQEKKMEDSS) are compositionally biased toward basic and acidic residues. A WH2 domain is found at 524-543 (VHENLMEAIRGSSIRQLRRV).

The protein belongs to the tropomodulin family. Can bind at least three actin monomers and thereby provides a nucleus for actin filament formation. Interacts (via N-terminus) with tropomyosin alpha (TPM1) (via N-terminus). May also interact with TPM2 (via N-terminus). Interacts with FLII. As to expression, detected in neonate heart (at protein level). Detected in embryonic heart and in pharyngeal arches. Detected in adult heart.

It localises to the cytoplasm. The protein resides in the myofibril. It is found in the sarcomere. Its subcellular location is the m line. The protein localises to the cytoskeleton. Its function is as follows. Mediates nucleation of actin filaments and thereby promotes actin polymerization. Plays a role in the regulation of actin filament length. Required for normal sarcomere organization in the heart, and for normal heart function. The protein is Leiomodin-2 (Lmod2) of Mus musculus (Mouse).